The primary structure comprises 185 residues: Class I hydrophobin SC6 (185 aa).

An N-terminal signal peptide occupies residues 1–17 (MVSRVLALISVAMLVGA). The tract at residues 70-104 (HIPEVTGSSTEEATSSSTWSGASSKPTDSAPTQCN) is disordered. A compositionally biased stretch (low complexity) spans 75-93 (TGSSTEEATSSSTWSGASS). Positions 94–104 (KPTDSAPTQCN) are enriched in polar residues. 4 disulfides stabilise this stretch: cysteine 103–cysteine 164, cysteine 110–cysteine 158, cysteine 111–cysteine 144, and cysteine 165–cysteine 178.

Belongs to the fungal hydrophobin family. As to quaternary structure, self-assembles to form functional amyloid fibrils called rodlets. Self-assembly into fibrillar rodlets occurs spontaneously at hydrophobic:hydrophilic interfaces and the rodlets further associate laterally to form amphipathic monolayers.

It is found in the secreted. The protein resides in the cell wall. In terms of biological role, aerial growth, conidiation, and dispersal of filamentous fungi in the environment rely upon a capability of their secreting small amphipathic proteins called hydrophobins (HPBs) with low sequence identity. Class I can self-assemble into an outermost layer of rodlet bundles on aerial cell surfaces, conferring cellular hydrophobicity that supports fungal growth, development and dispersal; whereas Class II form highly ordered films at water-air interfaces through intermolecular interactions but contribute nothing to the rodlet structure. SC6 is a dikaryon-specific class I hydrophobin that contributes to the formation of aerial hyphae and fruiting bodies. The polypeptide is Class I hydrophobin SC6 (Schizophyllum commune (Split gill fungus)).